Here is a 753-residue protein sequence, read N- to C-terminus: MAP/microtubule affinity-regulating kinase 3 (753 aa).

A disordered region spans residues 1–36 (MSTRTPLPTVNERDTENHTSHGDGRQEVTSRTSRSG). Positions 11-28 (NERDTENHTSHGDGRQEV) are enriched in basic and acidic residues. Serine 42 carries the post-translational modification Phosphoserine. The Protein kinase domain occupies 56–307 (YRLLKTIGKG…LEQIMKDRWI (252 aa)). ATP is bound by residues 62 to 70 (IGKGNFAKV) and lysine 85. Aspartate 178 functions as the Proton acceptor in the catalytic mechanism. Threonine 211 is subject to Phosphothreonine; by LKB1. Residues 326-365 (ISDQKRIDIMVGMGYSQEEIQESLSKMKYDEITATYLLLG) enclose the UBA domain. 10 positions are modified to phosphoserine: serine 368, serine 374, serine 376, serine 380, serine 383, leucine 384, serine 400, arginine 407, serine 419, and serine 469. The interval 370 to 600 (ELDASDSSSS…TPLSQTRSRG (231 aa)) is disordered. Positions 374–385 (SDSSSSSNLSLA) are enriched in low complexity. Positions 391 to 400 (SDLNNSTGQS) are enriched in polar residues. Composition is skewed to polar residues over residues 490 to 513 (STVP…CSER) and 521 to 548 (VIQN…SSAA). A phosphoserine mark is found at serine 540 and serine 543. Position 549 is a phosphothreonine (threonine 549). A Phosphothreonine; by PKC/PRKCZ modification is found at threonine 564. Phosphoserine occurs at positions 583, 598, 601, and 643. A compositionally biased stretch (polar residues) spans 584–600 (PSLSHEATPLSQTRSRG). Residues 632 to 655 (NGRYEGSSRNVSAEQKDENKEAKP) form a disordered region. A compositionally biased stretch (basic and acidic residues) spans 645–655 (EQKDENKEAKP). The KA1 domain occupies 704-753 (DGHAENLVQWEMEVCKLPRLSLNGVRFKRISGTSIAFKNIASKIANELKL).

It belongs to the protein kinase superfamily. CAMK Ser/Thr protein kinase family. SNF1 subfamily. As to quaternary structure, interacts with MAPT/TAU. Interacts with DLG5 (via coiled-coil domain). Interacts with STK3/MST2 and STK4/MST1 in the presence of DLG5. Interacts with YWHAB, YWHAG, YWHAQ and YWHAZ. Interacts with PKP2 (via N-terminus). Interacts with CDC25C. Interacts with KSR1. In terms of processing, phosphorylated at Thr-211 by STK11/LKB1 in complex with STE20-related adapter-alpha (STRADA) pseudo kinase and CAB39. Phosphorylation at Thr-564 by PRKCZ/aPKC inhibits the kinase activity. As to expression, ubiquitous.

The protein localises to the cell membrane. It localises to the cell projection. It is found in the dendrite. Its subcellular location is the cytoplasm. The catalysed reaction is L-seryl-[protein] + ATP = O-phospho-L-seryl-[protein] + ADP + H(+). It catalyses the reaction L-threonyl-[protein] + ATP = O-phospho-L-threonyl-[protein] + ADP + H(+). Activated by phosphorylation on Thr-211. Inhibited by phosphorylation on Thr-564. In terms of biological role, serine/threonine-protein kinase. Involved in the specific phosphorylation of microtubule-associated proteins for MAP2 and MAP4. Phosphorylates the microtubule-associated protein MAPT/TAU. Phosphorylates CDC25C on 'Ser-216'. Regulates localization and activity of some histone deacetylases by mediating phosphorylation of HDAC7, promoting subsequent interaction between HDAC7 and 14-3-3 and export from the nucleus. Regulates localization and activity of MITF by mediating its phosphorylation, promoting subsequent interaction between MITF and 14-3-3 and retention in the cytosol. Negatively regulates the Hippo signaling pathway and antagonizes the phosphorylation of LATS1. Cooperates with DLG5 to inhibit the kinase activity of STK3/MST2 toward LATS1. Phosphorylates PKP2 and KSR1. The sequence is that of MAP/microtubule affinity-regulating kinase 3 (MARK3) from Homo sapiens (Human).